A 335-amino-acid polypeptide reads, in one-letter code: Mycobacterial beta-ketoacyl-[acyl-carrier-protein] synthase III (335 aa).

Residues C122 and H258 contribute to the active site. Residues 259 to 263 form an ACP-binding region; that stretch reads QANSR. N289 is an active-site residue.

It belongs to the thiolase-like superfamily. FabH family. In terms of assembly, homodimer.

It is found in the cytoplasm. The enzyme catalyses malonyl-[ACP] + dodecanoyl-CoA + H(+) = 3-oxotetradecanoyl-[ACP] + CO2 + CoA. Its pathway is lipid metabolism; fatty acid biosynthesis. It participates in lipid metabolism; mycolic acid biosynthesis. Catalyzes the condensation reaction of fatty acid synthesis by the addition to an acyl acceptor of two carbons from malonyl-ACP. Catalyzes the first condensation reaction which initiates fatty acid synthesis and may therefore play a role in governing the total rate of fatty acid production. Possesses both acetoacetyl-ACP synthase and acetyl transacylase activities. Its substrate specificity determines the biosynthesis of branched-chain and/or straight-chain of fatty acids. The chain is Mycobacterial beta-ketoacyl-[acyl-carrier-protein] synthase III from Mycobacterium bovis (strain ATCC BAA-935 / AF2122/97).